The sequence spans 229 residues: Large ribosomal subunit protein uL1 (229 aa).

It belongs to the universal ribosomal protein uL1 family. In terms of assembly, part of the 50S ribosomal subunit.

In terms of biological role, binds directly to 23S rRNA. The L1 stalk is quite mobile in the ribosome, and is involved in E site tRNA release. Functionally, protein L1 is also a translational repressor protein, it controls the translation of the L11 operon by binding to its mRNA. This is Large ribosomal subunit protein uL1 from Clostridium acetobutylicum (strain ATCC 824 / DSM 792 / JCM 1419 / IAM 19013 / LMG 5710 / NBRC 13948 / NRRL B-527 / VKM B-1787 / 2291 / W).